A 215-amino-acid chain; its full sequence is HTH-type transcriptional repressor FabR (215 aa).

Residues 10–70 (KTRRSLVEAA…TMVDESGLML (61 aa)) form the HTH tetR-type domain. The segment at residues 33–52 (SLREVAREAGIAPTSFYRHF) is a DNA-binding region (H-T-H motif).

In terms of assembly, homodimer.

The protein resides in the cytoplasm. Represses the transcription of fabB, involved in unsaturated fatty acid (UFA) biosynthesis. By controlling UFA production, FabR directly influences the physical properties of the membrane bilayer. The polypeptide is HTH-type transcriptional repressor FabR (Shigella boydii serotype 18 (strain CDC 3083-94 / BS512)).